The primary structure comprises 390 residues: Phosphoglycerate kinase (390 aa).

Substrate is bound by residues 19 to 21, Arg34, 57 to 60, Arg115, and Arg148; these read DYN and HLGR. Residues Lys198, Gly289, Glu320, and 347–350 contribute to the ATP site; that span reads GGDS.

It belongs to the phosphoglycerate kinase family. Monomer.

It localises to the cytoplasm. The catalysed reaction is (2R)-3-phosphoglycerate + ATP = (2R)-3-phospho-glyceroyl phosphate + ADP. The protein operates within carbohydrate degradation; glycolysis; pyruvate from D-glyceraldehyde 3-phosphate: step 2/5. In Thermus thermophilus (strain ATCC BAA-163 / DSM 7039 / HB27), this protein is Phosphoglycerate kinase.